Consider the following 611-residue polypeptide: UvrABC system protein C (611 aa).

The GIY-YIG domain maps to 6–84; that stretch reads NNPGVYRMFN…IKRLRPRFNV (79 aa). One can recognise a UVR domain in the interval 194–229; that stretch reads QSVKDHLAAAMQAASADLDFEHAAVYRDRLAALSHV.

Belongs to the UvrC family. In terms of assembly, interacts with UvrB in an incision complex.

It localises to the cytoplasm. The UvrABC repair system catalyzes the recognition and processing of DNA lesions. UvrC both incises the 5' and 3' sides of the lesion. The N-terminal half is responsible for the 3' incision and the C-terminal half is responsible for the 5' incision. The sequence is that of UvrABC system protein C from Brucella abortus (strain 2308).